The sequence spans 126 residues: MEFPKNLRYSEEHEWVRVEGNKAYIGITSFAQAELGDIVFVELPEVGATIQQDEPFGSVESVKTVSELYAPVTGKVVEVNGELEDAPELVNSSPYEQAWMIVVELSDTAELDKLMDADKYEAMVKE.

Residues 22–104 form the Lipoyl-binding domain; the sequence is KAYIGITSFA…YEQAWMIVVE (83 aa). Residue Lys63 is modified to N6-lipoyllysine.

This sequence belongs to the GcvH family. The glycine cleavage system is composed of four proteins: P, T, L and H. (R)-lipoate is required as a cofactor.

Functionally, the glycine cleavage system catalyzes the degradation of glycine. The H protein shuttles the methylamine group of glycine from the P protein to the T protein. In terms of biological role, is also involved in protein lipoylation via its role as an octanoyl/lipoyl carrier protein intermediate. This chain is Glycine cleavage system H protein, found in Brevibacillus brevis (strain 47 / JCM 6285 / NBRC 100599).